The primary structure comprises 240 residues: MSSPAPSGTQVQPGSLRPCPGAVSPVVPRRLARGRLESSFSVEAILARPKTRELAATSLPLSTCTSLNLLGAVSQYGVLPWVCSTGSWLPAYLSVGVYPLCSMSCVPGLNVTHHQQGLRLTGSELPYCLGPLKWAPTVDLRDHGTERHTKRVRTTFNLQQLQELEKVFAKQHNLVGKERAQLAARLHLTENQVRIWFQNRRVKYQKQQKLKLPSSSVMEEPSSSSDGNIQSEDAELGIGS.

The span at 1–13 (MSSPAPSGTQVQP) shows a compositional bias: polar residues. Disordered regions lie at residues 1–21 (MSSP…PCPG) and 208–240 (QKLK…GIGS). The segment at residues 149–208 (TKRVRTTFNLQQLQELEKVFAKQHNLVGKERAQLAARLHLTENQVRIWFQNRRVKYQKQQ) is a DNA-binding region (homeobox). The segment covering 213–225 (PSSSVMEEPSSSS) has biased composition (low complexity).

The protein resides in the nucleus. In terms of biological role, transcription factor that controls node morphogenesis. Acts downstream of both FOXA2 and Brachyury (T) during notochord development. Is essential for cilia formation in the posterior notochord (PNC) and for left-right patterning; acts upstream of FOXJ1 and RFX3 in this process and is required for the expression of various components important for axonemal assembly and function. Plays a role in regulating axial versus paraxial cell fate. Activates the transcription of ciliary proteins C11orf97 homolog, FAM183B and SPACA9 in the embryonic ventral node. The chain is Homeobox protein notochord (Noto) from Mus musculus (Mouse).